The chain runs to 126 residues: Large ribosomal subunit protein bL12 (126 aa).

The protein belongs to the bacterial ribosomal protein bL12 family. Homodimer. Part of the ribosomal stalk of the 50S ribosomal subunit. Forms a multimeric L10(L12)X complex, where L10 forms an elongated spine to which 2 to 4 L12 dimers bind in a sequential fashion. Binds GTP-bound translation factors.

Functionally, forms part of the ribosomal stalk which helps the ribosome interact with GTP-bound translation factors. Is thus essential for accurate translation. This Beijerinckia indica subsp. indica (strain ATCC 9039 / DSM 1715 / NCIMB 8712) protein is Large ribosomal subunit protein bL12.